The following is a 497-amino-acid chain: Bloodstream-specific protein 2 (497 aa).

Residues 1–14 (MRAIFLVALALATM) form the signal peptide. Positions 15–124 (RESTAESLKL…IIKYIKANVG (110 aa)) constitute a Thioredoxin 1 domain. Asn-30 carries an N-linked (GlcNAc...) asparagine glycan. An intrachain disulfide couples Cys-48 to Cys-51. Residues Asn-63, Asn-85, Asn-153, Asn-154, Asn-250, and Asn-278 are each glycosylated (N-linked (GlcNAc...) asparagine). Residues 334–455 (EPTIKSLPVP…VYEFVRKHVT (122 aa)) enclose the Thioredoxin 2 domain. Catalysis depends on nucleophile residues Cys-378 and Cys-381. An intrachain disulfide couples Cys-378 to Cys-381. N-linked (GlcNAc...) asparagine glycosylation is found at Asn-413, Asn-465, Asn-476, Asn-482, Asn-485, and Asn-488. The interval 461 to 497 (EKPANVTEEKKSEEENKSSKSNESNDSNESNVDKQDL) is disordered. The segment covering 467 to 480 (TEEKKSEEENKSSK) has biased composition (basic and acidic residues). Over residues 481–490 (SNESNDSNES) the composition is skewed to low complexity.

Belongs to the protein disulfide isomerase family.

This chain is Bloodstream-specific protein 2 (BS2), found in Trypanosoma brucei brucei.